The primary structure comprises 450 residues: Phosphopentomutase (450 aa).

Ser93 acts as the Phosphoserine intermediate in catalysis. Residues Ser93, Asp231, Asp233, and Asp235 each contribute to the Mg(2+) site. Ser93 bears the Phosphoserine; by autocatalysis mark.

The protein belongs to the phosphohexose mutase family. In terms of assembly, homotetramer. It depends on Mg(2+) as a cofactor. Post-translationally, activated by phosphorylation.

It carries out the reaction alpha-D-ribose 1-phosphate = D-ribose 5-phosphate. The enzyme catalyses 2-deoxy-alpha-D-ribose 1-phosphate = 2-deoxy-D-ribose 5-phosphate. Its function is as follows. Catalyzes the conversion of deoxyribose 1-phosphate to deoxyribose 5-phosphate. Also shows weak activity with glucose 1-phosphate and mannose 1-phosphate. Could be involved in pentose biosynthesis. This chain is Phosphopentomutase, found in Thermococcus kodakarensis (strain ATCC BAA-918 / JCM 12380 / KOD1) (Pyrococcus kodakaraensis (strain KOD1)).